The primary structure comprises 121 residues: Holin-like protein CidA (121 aa).

A run of 3 helical transmembrane segments spans residues 27–47, 58–78, and 89–109; these read VHLP…SLKF, GADF…VAVI, and IDLI…TGIL.

It belongs to the CidA/LrgA family. CidA subfamily.

It localises to the cell membrane. Increases the activity of extracellular murein hydrolases possibly by mediating their export via hole formation. Inhibited by the antiholin-like proteins LrgAB. In an unstressed cell, the LrgAB products probably inhibit the function of the CidA protein. When a cell is stressed by the addition of antibiotics or by other factors in the environment, CidA possibly oligomerizes within the bacterial cell membrane, creating lesions that disrupt the proton motive force, which in turn results in loss of cell viability. These lesions are also hypothesized to regulate the subsequent cell lysis by either allowing the murein hydrolases access to the cell wall substrate and/or regulating their activity by a possible change in the cell wall pH that results from loss of membrane potential. The sequence is that of Holin-like protein CidA from Bacillus cytotoxicus (strain DSM 22905 / CIP 110041 / 391-98 / NVH 391-98).